Consider the following 311-residue polypeptide: GTP cyclohydrolase FolE2 (311 aa).

This sequence belongs to the GTP cyclohydrolase IV family.

The enzyme catalyses GTP + H2O = 7,8-dihydroneopterin 3'-triphosphate + formate + H(+). Its pathway is cofactor biosynthesis; 7,8-dihydroneopterin triphosphate biosynthesis; 7,8-dihydroneopterin triphosphate from GTP: step 1/1. Functionally, converts GTP to 7,8-dihydroneopterin triphosphate. The protein is GTP cyclohydrolase FolE2 of Xanthomonas campestris pv. campestris (strain 8004).